A 396-amino-acid polypeptide reads, in one-letter code: Protein-export membrane protein SecD (396 aa).

6 consecutive transmembrane segments (helical) span residues 12-32, 243-263, 272-292, 298-318, 338-358, and 360-380; these read ILIL…KGLD, LKGT…IVSI, IPIL…ASLI, LPSI…QIVI, FFII…LFVL, and VGML…GIFI.

It belongs to the SecD/SecF family. SecD subfamily. As to quaternary structure, part of the protein translocation apparatus. Forms a complex with SecF.

It localises to the cell membrane. In terms of biological role, involved in protein export. The protein is Protein-export membrane protein SecD of Methanocaldococcus jannaschii (strain ATCC 43067 / DSM 2661 / JAL-1 / JCM 10045 / NBRC 100440) (Methanococcus jannaschii).